The following is a 293-amino-acid chain: Plant cysteine oxidase 1 (293 aa).

His-148, His-150, and His-211 together coordinate Fe cation. Residues 250–293 are disordered; sequence SEDDDVLSSEEEKEGYAWLQERDDNPEDHTNVVGALYRGPKVED. The segment covering 251–262 has biased composition (acidic residues); sequence EDDDVLSSEEEK. Positions 269–279 are enriched in basic and acidic residues; it reads QERDDNPEDHT.

The protein belongs to the cysteine dioxygenase family. Requires Fe(2+) as cofactor.

Its subcellular location is the nucleus. It localises to the cytoplasm. It carries out the reaction L-cysteine + O2 = 3-sulfino-L-alanine + H(+). In terms of biological role, catalyzes the oxidation of N-terminal cysteine residues (N-Cys), thus preparing the protein for N-end rule pathway-mediated proteasomal degradation, upstream of the N-end rule enzymes ATE1, ATE2 and PRT6. Controls the preparation of the group VII ethylene response factor (ERF-VII) proteins for degradation via the 26S proteasome N-end rule pathway. Acts as an oxygen sensor that controls the stability of ERF-VII proteins, which are stabilized in flooding-induced hypoxia, and regulate transcriptional adaptation to these adverse conditions. Not active on Cys located inside or at the C-terminus of a peptide. Acts redundantly with PCO2 to repress the anaerobic response. In Arabidopsis thaliana (Mouse-ear cress), this protein is Plant cysteine oxidase 1.